The following is a 451-amino-acid chain: tRNA-2-methylthio-N(6)-dimethylallyladenosine synthase (451 aa).

The MTTase N-terminal domain occupies Lys10–Gln128. [4Fe-4S] cluster contacts are provided by Cys19, Cys55, Cys89, Cys165, Cys169, and Cys172. In terms of domain architecture, Radical SAM core spans Arg151–Gln381. The TRAM domain maps to Lys384–Glu447.

This sequence belongs to the methylthiotransferase family. MiaB subfamily. As to quaternary structure, monomer. [4Fe-4S] cluster is required as a cofactor.

The protein resides in the cytoplasm. The catalysed reaction is N(6)-dimethylallyladenosine(37) in tRNA + (sulfur carrier)-SH + AH2 + 2 S-adenosyl-L-methionine = 2-methylsulfanyl-N(6)-dimethylallyladenosine(37) in tRNA + (sulfur carrier)-H + 5'-deoxyadenosine + L-methionine + A + S-adenosyl-L-homocysteine + 2 H(+). Catalyzes the methylthiolation of N6-(dimethylallyl)adenosine (i(6)A), leading to the formation of 2-methylthio-N6-(dimethylallyl)adenosine (ms(2)i(6)A) at position 37 in tRNAs that read codons beginning with uridine. This chain is tRNA-2-methylthio-N(6)-dimethylallyladenosine synthase, found in Natranaerobius thermophilus (strain ATCC BAA-1301 / DSM 18059 / JW/NM-WN-LF).